Reading from the N-terminus, the 238-residue chain is Sugar fermentation stimulation protein homolog (238 aa).

The protein belongs to the SfsA family.

The chain is Sugar fermentation stimulation protein homolog from Histophilus somni (strain 129Pt) (Haemophilus somnus).